Consider the following 353-residue polypeptide: DNA integrity scanning protein DisA (353 aa).

In terms of domain architecture, DAC spans 6–144; the sequence is DKELMNILKI…GGIKYVLRDS (139 aa). ATP is bound by residues glycine 73, leucine 91, and 104–108; that span reads TRHRT.

It belongs to the DisA family. As to quaternary structure, homooctamer. The cofactor is Mg(2+).

The enzyme catalyses 2 ATP = 3',3'-c-di-AMP + 2 diphosphate. Its function is as follows. Participates in a DNA-damage check-point that is active prior to asymmetric division when DNA is damaged. DisA forms globular foci that rapidly scan along the chromosomes during sporulation, searching for lesions. When a lesion is present, DisA pauses at the lesion site. This triggers a cellular response that culminates in a temporary block in sporulation initiation. Also has diadenylate cyclase activity, catalyzing the condensation of 2 ATP molecules into cyclic di-AMP (c-di-AMP). c-di-AMP acts as a signaling molecule that couples DNA integrity with progression of sporulation. The rise in c-di-AMP level generated by DisA while scanning the chromosome, operates as a positive signal that advances sporulation; upon encountering a lesion, the DisA focus arrests at the damaged site and halts c-di-AMP synthesis. The chain is DNA integrity scanning protein DisA from Clostridium botulinum (strain Loch Maree / Type A3).